The chain runs to 162 residues: Large ribosomal subunit protein uL15 (162 aa).

Over residues 1 to 10 the composition is skewed to basic and acidic residues; sequence MNLNELRDNA. The interval 1 to 39 is disordered; sequence MNLNELRDNAGSRYRKKRLGRGIGSGKGKTSGKGVKGQK. Residues 21 to 35 are compositionally biased toward gly residues; it reads RGIGSGKGKTSGKGV.

It belongs to the universal ribosomal protein uL15 family. In terms of assembly, part of the 50S ribosomal subunit.

Functionally, binds to the 23S rRNA. The chain is Large ribosomal subunit protein uL15 from Gluconacetobacter diazotrophicus (strain ATCC 49037 / DSM 5601 / CCUG 37298 / CIP 103539 / LMG 7603 / PAl5).